Consider the following 287-residue polypeptide: Shikimate kinase 3, chloroplastic (287 aa).

Residues 1–57 (MDAGVGLRAKPGAWAGLGNPRRSSTARVPVRFAVEKFAQPLVLGSDRRSCGAKLKVS) constitute a chloroplast transit peptide. Residue 98–105 (GMMGSGKT) participates in ATP binding. A Mg(2+)-binding site is contributed by threonine 105. Residues aspartate 123, arginine 148, and glycine 170 each contribute to the substrate site. Residue arginine 209 coordinates ATP.

This sequence belongs to the shikimate kinase family. The cofactor is Mg(2+). As to expression, expressed in panicles.

The protein resides in the plastid. Its subcellular location is the chloroplast. The enzyme catalyses shikimate + ATP = 3-phosphoshikimate + ADP + H(+). Its pathway is metabolic intermediate biosynthesis; chorismate biosynthesis; chorismate from D-erythrose 4-phosphate and phosphoenolpyruvate: step 5/7. Catalyzes the specific phosphorylation of the 3-hydroxyl group of shikimic acid using ATP as a cosubstrate. The sequence is that of Shikimate kinase 3, chloroplastic (SK3) from Oryza sativa subsp. japonica (Rice).